Here is a 484-residue protein sequence, read N- to C-terminus: Acetyl-coenzyme A carboxylase carboxyl transferase subunit beta, chloroplastic (484 aa).

The CoA carboxyltransferase N-terminal domain occupies 223–484; sequence LWIQCDNCYG…LHAFFPLNKN (262 aa). Zn(2+)-binding residues include Cys227, Cys230, Cys243, and Cys246. A C4-type zinc finger spans residues 227-246; that stretch reads CDNCYGLMYKKVKMNVCEQC.

It belongs to the AccD/PCCB family. In terms of assembly, acetyl-CoA carboxylase is a heterohexamer composed of biotin carboxyl carrier protein, biotin carboxylase and 2 subunits each of ACCase subunit alpha and ACCase plastid-coded subunit beta (accD). It depends on Zn(2+) as a cofactor.

The protein localises to the plastid. The protein resides in the chloroplast stroma. It carries out the reaction N(6)-carboxybiotinyl-L-lysyl-[protein] + acetyl-CoA = N(6)-biotinyl-L-lysyl-[protein] + malonyl-CoA. It participates in lipid metabolism; malonyl-CoA biosynthesis; malonyl-CoA from acetyl-CoA: step 1/1. Functionally, component of the acetyl coenzyme A carboxylase (ACC) complex. Biotin carboxylase (BC) catalyzes the carboxylation of biotin on its carrier protein (BCCP) and then the CO(2) group is transferred by the transcarboxylase to acetyl-CoA to form malonyl-CoA. The chain is Acetyl-coenzyme A carboxylase carboxyl transferase subunit beta, chloroplastic from Crucihimalaya wallichii (Rock-cress).